The chain runs to 524 residues: Bifunctional purine biosynthesis protein PurH (524 aa).

The 149-residue stretch at 1–149 folds into the MGS-like domain; sequence MSDPLIKRAL…KNNESVTVLT (149 aa).

Belongs to the PurH family.

It carries out the reaction (6R)-10-formyltetrahydrofolate + 5-amino-1-(5-phospho-beta-D-ribosyl)imidazole-4-carboxamide = 5-formamido-1-(5-phospho-D-ribosyl)imidazole-4-carboxamide + (6S)-5,6,7,8-tetrahydrofolate. The enzyme catalyses IMP + H2O = 5-formamido-1-(5-phospho-D-ribosyl)imidazole-4-carboxamide. Its pathway is purine metabolism; IMP biosynthesis via de novo pathway; 5-formamido-1-(5-phospho-D-ribosyl)imidazole-4-carboxamide from 5-amino-1-(5-phospho-D-ribosyl)imidazole-4-carboxamide (10-formyl THF route): step 1/1. It participates in purine metabolism; IMP biosynthesis via de novo pathway; IMP from 5-formamido-1-(5-phospho-D-ribosyl)imidazole-4-carboxamide: step 1/1. This is Bifunctional purine biosynthesis protein PurH from Chlorobium luteolum (strain DSM 273 / BCRC 81028 / 2530) (Pelodictyon luteolum).